A 608-amino-acid polypeptide reads, in one-letter code: Actin-related protein 8 (608 aa).

The tract at residues 1-20 (MQRSRASSTSSGRLQASQQV) is disordered. 272–275 (DIGA) lines the ATP pocket.

This sequence belongs to the actin family. ARP8 subfamily. In terms of assembly, component of the chromatin remodeling Ino80 complex. Exists as monomers and dimers, but the dimer is most probably the biologically relevant form required for stable interactions with histones that exploits the twofold symmetry of the nucleosome core.

The protein resides in the nucleus. Plays an important role in the functional organization of mitotic chromosomes. Exhibits low basal ATPase activity, and unable to polymerize. Its function is as follows. Proposed core component of the chromatin remodeling INO80 complex which is involved in transcriptional regulation, DNA replication and probably DNA repair. Strongly prefer nucleosomes and H3-H4 tetramers over H2A-H2B dimers, suggesting it may act as a nucleosome recognition module within the complex. This is Actin-related protein 8 from Drosophila pseudoobscura pseudoobscura (Fruit fly).